The chain runs to 212 residues: Large ribosomal subunit protein uL3 (212 aa).

The segment at 135 to 161 (MTHGNSLSHRAPGSIGQNQSPGKVFKG) is disordered. The residue at position 153 (Gln-153) is an N5-methylglutamine.

The protein belongs to the universal ribosomal protein uL3 family. As to quaternary structure, part of the 50S ribosomal subunit. Forms a cluster with proteins L14 and L19. Post-translationally, methylated by PrmB.

Its function is as follows. One of the primary rRNA binding proteins, it binds directly near the 3'-end of the 23S rRNA, where it nucleates assembly of the 50S subunit. The protein is Large ribosomal subunit protein uL3 of Alteromonas mediterranea (strain DSM 17117 / CIP 110805 / LMG 28347 / Deep ecotype).